The following is a 107-amino-acid chain: Thioredoxin-1 (107 aa).

A Thioredoxin domain is found at 2–106 (ASVRTMNDYH…LTNMMAKLVK (105 aa)). Residues Cys31 and Cys34 each act as nucleophile in the active site. Residues Cys31 and Cys34 are joined by a disulfide bond.

It belongs to the thioredoxin family. As to expression, ovary specific. Expressed present in the nurse cells from stage 9 of ovary development and is transported into the oocyte. Expressed throughout oogenesis.

Its subcellular location is the nucleus. Functionally, participates in various redox reactions through the reversible oxidation of its active center dithiol to a disulfide and catalyzes dithiol-disulfide exchange reactions. As a reducing substrate of peroxiredoxin 1, thioredoxin 2 is preferred over thioredoxin 1. Required for female meiosis and early embryonic development. This is Thioredoxin-1 (dhd) from Drosophila melanogaster (Fruit fly).